Consider the following 513-residue polypeptide: Cytochrome P450 monooxygenase CYP3 (513 aa).

The interval 1–21 (MLPRSLGHSTSELSPPFDGPN) is disordered. Cys451 is a binding site for heme.

Belongs to the cytochrome P450 family. The cofactor is heme.

It functions in the pathway secondary metabolite biosynthesis. Functionally, cytochrome P450 monooxygenase; part of the gene cluster that mediates the biosynthesis of a tyrosine-derived cytochalasan acting as a fungal signal recognized by resistant rice plants and leads to avirulence in Pi33 resistant rice cultivars. The first step in the pathway is catalyzed by the hybrid PKS-NRPS ACE1, assisted by the enoyl reductase RAP1, that are responsible for fusion of the tyrosine precursor and the polyketide backbone. The polyketide synthase module (PKS) of ACE1 is responsible for the synthesis of the polyketide backbone and the downstream nonribosomal peptide synthetase (NRPS) amidates the carboxyl end of the polyketide with the tyrosine precursor. Because ACE1 lacks a designated enoylreductase (ER) domain, the required activity is provided the enoyl reductase RAP1. Reduction by the hydrolyase ORFZ, followed by dehydration and intra-molecular Diels-Alder cyclization by the Diels-Alderase ORF3 then yield the required isoindolone-fused macrocycle. A number of oxidative steps catalyzed by the tailoring enzymes identified within the cluster, including cytochrome P450 monooxygenases CYP1 to CYP4, the FAD-linked oxidoreductase OXR2 and the short-chain dehydrogenase/reductase OXR1, are further required to afford the final cytochalasans that confer avirulence and which have still to be identified. The monooxygenase CYP1 has been shown to be a site-selective C-18 hydroxylase whereas the function of CYP3 is the site-selective epoxidation of the C-6/C-7 olefin that is present in some intermediate compounds. Finally, SYN2 and RAP2 are not required for avirulence in Pi33 resistant rice cultivars. The polypeptide is Cytochrome P450 monooxygenase CYP3 (Pyricularia oryzae (strain 70-15 / ATCC MYA-4617 / FGSC 8958) (Rice blast fungus)).